Here is a 450-residue protein sequence, read N- to C-terminus: Crinkler effector protein 63 (450 aa).

Positions 1-17 (MVKLFCAIVGAAGSAFP) are cleaved as a signal peptide. An LQLFLAK domain region spans residues 18–55 (VDIDAGQSAGDLKDAIKAKNPATITCDAKDLQLSLAKT). A DWL domain region spans residues 58–117 (GAWLPDDDQAALDLEDGKVHEDIQALIDGEKMKATWTIEDVLTANNMTKRKGRAPKSRQI). N-linked (GlcNAc...) asparagine glycosylation is present at Asn103. An HVLVXXP motif motif is present at residues 118–124 (HVLVVVP). The effector domain stretch occupies residues 125 to 450 (EGAFGSASET…RSIPTFSYFS (326 aa)). The Nuclear localization signal (NLS) motif lies at 218 to 224 (QRKRYRR). N-linked (GlcNAc...) asparagine glycosylation occurs at Asn342.

It belongs to the Crinkler effector family. In terms of assembly, forms a homodimer via an inverted association manner. Forms heterodimers with CRN79 and CRN115.

The protein localises to the secreted. Its subcellular location is the host nucleus. It is found in the host nucleoplasm. Functionally, secreted effector that, with CRN115, is critical to pathogenesis by modulating host defenses. Induces cell death in plant host cells. Suppresses callose deposition and affects expression of defense-related genes including two salicylic acid (SA) signal-induced and antimicrobial PR genes (PR1 and PR2), and genes involved in jasmonic acid (JA)/ethylene (ET)-mediated defense pathway (ERF1, ORA59, PDF1.2). CRN115 and CRN63 may share the same molecular host targets that are involved in the cell death signal transduction pathway and that their differential activities are dependent on plant nuclear localization or not. Does not affect MAPK activation and BIK1 phosphorylation and acts downstream of the MAPK cascades in PTI signaling. The polypeptide is Crinkler effector protein 63 (Phytophthora sojae (strain P6497) (Soybean stem and root rot agent)).